The chain runs to 318 residues: MAAGGGGGGGGSSSGRTPTWKERENNKKRERRRRAITAKIYSGLRAQGNYKLPKHCDNNEVLKALCLEAGWIVEDDGTTYRKGFKPPASDISGTPTNFSTNSSIQPSPQSSAFPSPAPSYHGSPVSSSFPSPSRYDGNPSSYLLLPFLHNIASSIPANLPPLRISNSAPVTPPLSSPTSRGSKRKLTSEQLPNGGSLHVLRHPLFAISAPSSPTRRAGHQTPPTIPECDESEEDSIEDSGRWINFQSTAPTSPTFNLVQQTSMAIDMKRSDWGMSGMNGRGAEFEFENGTVKPWEGEMIHEVGVEDLELTLGGTKARC.

Gly residues predominate over residues 1-13 (MAAGGGGGGGGSS). 4 disordered regions span residues 1–34 (MAAGGGGGGGGSSSGRTPTWKERENNKKRERRRR), 84–133 (FKPP…PSPS), 166–195 (NSAPVTPPLSSPTSRGSKRKLTSEQLPNGG), and 209–231 (APSSPTRRAGHQTPPTIPECDES). The tract at residues 16–97 (RTPTWKEREN…ASDISGTPTN (82 aa)) is required for DNA-binding. The segment covering 91–101 (ISGTPTNFSTN) has biased composition (polar residues). A compositionally biased stretch (low complexity) spans 102–133 (SSIQPSPQSSAFPSPAPSYHGSPVSSSFPSPS).

Belongs to the BZR/LAT61 family. Phosphorylated. Phosphorylation increases protein degradation.

The chain is BES1/BZR1 homolog protein 2 (BEH2) from Arabidopsis thaliana (Mouse-ear cress).